A 597-amino-acid polypeptide reads, in one-letter code: Blastula protease 10 (597 aa).

Residues 1-16 (MKLILFLSGLVSLVLC) form the signal peptide. The propeptide at 17–93 (TLAAPTGDQK…DEMTGRKKRK (77 aa)) is activation peptide. The segment at 24 to 67 (DQKEIHTETPPPKKPSETTTPGALKTPQPEPKDEEPTPGAFQGD) is disordered. One can recognise a Peptidase M12A domain in the interval 93–294 (KATIYESQRW…ELANLIYECD (202 aa)). Intrachain disulfides connect Cys134-Cys293, Cys162-Cys182, Cys299-Cys315, Cys305-Cys317, Cys319-Cys328, Cys339-Cys365, Cys392-Cys412, Cys484-Cys510, and Cys537-Cys557. His190 lines the Zn(2+) pocket. Residue Glu191 is part of the active site. Residues His194 and His200 each contribute to the Zn(2+) site. Positions 295–329 (DIEDCAGANECLNGGYHDTECNCVCPSGYNGDLCE) constitute an EGF-like domain. 2 CUB domains span residues 339–449 (CSER…YRIV) and 484–595 (CGGS…YRAI).

Zn(2+) serves as cofactor.

Its subcellular location is the cytoplasm. The protein resides in the perinuclear region. It is found in the cell cortex. The protein localises to the secreted. It localises to the extracellular space. Could be involved in the differentiation of ectodermal lineages and subsequent patterning of the embryo. This is Blastula protease 10 (BP10) from Paracentrotus lividus (Common sea urchin).